The primary structure comprises 304 residues: Porphobilinogen deaminase (304 aa).

At cysteine 240 the chain carries S-(dipyrrolylmethanemethyl)cysteine.

This sequence belongs to the HMBS family. Monomer. Requires dipyrromethane as cofactor.

The enzyme catalyses 4 porphobilinogen + H2O = hydroxymethylbilane + 4 NH4(+). Its pathway is porphyrin-containing compound metabolism; protoporphyrin-IX biosynthesis; coproporphyrinogen-III from 5-aminolevulinate: step 2/4. Functionally, tetrapolymerization of the monopyrrole PBG into the hydroxymethylbilane pre-uroporphyrinogen in several discrete steps. This chain is Porphobilinogen deaminase, found in Xanthomonas axonopodis pv. citri (strain 306).